The chain runs to 91 residues: UPF0250 protein PFLU_5418 (91 aa).

It belongs to the UPF0250 family.

The chain is UPF0250 protein PFLU_5418 from Pseudomonas fluorescens (strain SBW25).